We begin with the raw amino-acid sequence, 521 residues long: Interleukin-9 receptor (521 aa).

The signal sequence occupies residues 1-40; that stretch reads MGLGRCIWEGWTLESEALRRDMGTWLLACICICTCVCLGV. Over 41-270 the chain is Extracellular; sequence SVTGEGQGPR…GPLIPPWGWP (230 aa). 2 N-linked (GlcNAc...) asparagine glycosylation sites follow: Asn-117 and Asn-156. One can recognise a Fibronectin type-III domain in the interval 149–259; it reads PPSDLQSNIS…QPVCFQAPQR (111 aa). A WSXWS motif motif is present at residues 245 to 249; sequence WSEWS. The chain crosses the membrane as a helical span at residues 271-291; the sequence is GNTLVAVSIFLLLTGPTYLLF. The Cytoplasmic portion of the chain corresponds to 292–521; it reads KLSPRVKRIF…VLSKARSWTF (230 aa). Residues 301–309 carry the Box 1 motif motif; the sequence is FYQNVPSPA. The segment at 413–439 is disordered; the sequence is WAPTSLTRPAPPDSEGSRSSSSSSSSN. The segment covering 429 to 439 has biased composition (low complexity); that stretch reads SRSSSSSSSSN.

This sequence belongs to the type I cytokine receptor family. Type 4 subfamily. Interacts with IL9.

It localises to the cell membrane. The protein localises to the secreted. Functionally, plays an important role in the immune response against parasites by acting as a receptor of IL9. This chain is Interleukin-9 receptor (IL9R), found in Homo sapiens (Human).